We begin with the raw amino-acid sequence, 215 residues long: Ras-related protein Rab-5B (215 aa).

Positions 29, 30, 32, 33, 34, 35, 46, 47, 52, 78, 133, 134, 136, 164, and 165 each coordinate GTP. A Mg(2+)-binding site is contributed by Ser34. Short sequence motifs (switch) lie at residues 44–56 and 77–93; these read QFHE…IGAA and AGQE…YRGA. A Mg(2+)-binding site is contributed by Thr52. Residues 184–215 form a disordered region; that stretch reads SEPQSTSGAAGRSRGVDLHEQTQQNKSQCCSN. Polar residues predominate over residues 204 to 215; that stretch reads QTQQNKSQCCSN. 2 S-geranylgeranyl cysteine lipidation sites follow: Cys212 and Cys213.

This sequence belongs to the small GTPase superfamily. Rab family. The cofactor is Mg(2+).

The protein localises to the cell membrane. It localises to the early endosome membrane. The catalysed reaction is GTP + H2O = GDP + phosphate + H(+). Regulated by guanine nucleotide exchange factors (GEFs) which promote the exchange of bound GDP for free GTP. Regulated by GTPase activating proteins (GAPs) which increase the GTP hydrolysis activity. Inhibited by GDP dissociation inhibitors (GDIs). The small GTPases Rab are key regulators of intracellular membrane trafficking, from the formation of transport vesicles to their fusion with membranes. Rabs cycle between an inactive GDP-bound form and an active GTP-bound form that is able to recruit to membranes different sets of downstream effectors directly responsible for vesicle formation, movement, tethering and fusion. This Gallus gallus (Chicken) protein is Ras-related protein Rab-5B (RAB5B).